Consider the following 346-residue polypeptide: Hexosaminidase D (346 aa).

Catalysis depends on glutamate 141, which acts as the Proton donor.

The protein belongs to the glycosyl hydrolase 20 family. In terms of assembly, homodimer; disulfide-linked.

Its subcellular location is the cytoplasm. The protein localises to the nucleus. It is found in the extracellular vesicle. The enzyme catalyses Hydrolysis of terminal non-reducing N-acetyl-D-hexosamine residues in N-acetyl-beta-D-hexosaminides.. Inhibited by O-(2-acetamido-2-deoxy-D-glucopyranosylidene)amino N-phenylcarbamate (PUGNAc). Inhibited by galacto-NAG-thiazoline. In terms of biological role, has hexosaminidase activity. Responsible for the cleavage of the monosaccharides N-acetylglucosamine (GlcNAc) and N-acetylgalactosamine (GalNAc) from cellular substrates. Has a preference for galactosaminide over glucosaminide substrates. The protein is Hexosaminidase D of Bos taurus (Bovine).